The sequence spans 186 residues: Ion-translocating oxidoreductase complex subunit B (186 aa).

A hydrophobic region spans residues 1 to 23 (MLTPILALTALALIAGALLGFAA). The region spanning 29–88 (EGNPIADQVDAVLPQTQCGQCGFGGCRPYAEAIAAGEAEINRCPPGGQDTVQTLADLLGV) is the 4Fe-4S domain. 12 residues coordinate [4Fe-4S] cluster: Cys-46, Cys-49, Cys-54, Cys-71, Cys-114, Cys-117, Cys-120, Cys-124, Cys-144, Cys-147, Cys-150, and Cys-154. 2 4Fe-4S ferredoxin-type domains span residues 105 to 134 (QVAW…GAAK) and 135 to 164 (QMHT…MVPV).

It belongs to the 4Fe4S bacterial-type ferredoxin family. RnfB subfamily. As to quaternary structure, the complex is composed of six subunits: RnfA, RnfB, RnfC, RnfD, RnfE and RnfG. It depends on [4Fe-4S] cluster as a cofactor.

The protein resides in the cell inner membrane. Functionally, part of a membrane-bound complex that couples electron transfer with translocation of ions across the membrane. In Alkalilimnicola ehrlichii (strain ATCC BAA-1101 / DSM 17681 / MLHE-1), this protein is Ion-translocating oxidoreductase complex subunit B.